The sequence spans 211 residues: Chaperone protein TorD (211 aa).

This sequence belongs to the TorD/DmsD family. TorD subfamily.

It is found in the cytoplasm. Its function is as follows. Involved in the biogenesis of TorA. Acts on TorA before the insertion of the molybdenum cofactor and, as a result, probably favors a conformation of the apoenzyme that is competent for acquiring the cofactor. The chain is Chaperone protein TorD from Shewanella loihica (strain ATCC BAA-1088 / PV-4).